The sequence spans 310 residues: Vomeronasal type-1 receptor 40 (310 aa).

The Extracellular portion of the chain corresponds to 1–20 (MNKANMLRTDKDMQIILFSE). A helical transmembrane segment spans residues 21 to 41 (VSVGISANSILFIAHVCMILG). Residues 42–50 (ENRPKPIDL) are Cytoplasmic-facing. Residues 51–71 (YIAFLSLTQLMLLITMGLIAV) form a helical membrane-spanning segment. The Extracellular segment spans residues 72-93 (DMFLSQGIWDSTTCQSLIYLHR). Cysteine 85 and cysteine 172 form a disulfide bridge. A helical membrane pass occupies residues 94 to 114 (LLRGLSLCATCLLNILWTITL). Over 115 to 134 (SSRSFCSTKFKHKSPHHISG) the chain is Cytoplasmic. Residues 135-155 (AFIFFCVLYMSFSSHLFISII) form a helical membrane-spanning segment. The Extracellular portion of the chain corresponds to 156–190 (ATHNLTSENFIYVTQSCSLLPLSYSRTSMFSAPMA). The N-linked (GlcNAc...) asparagine glycan is linked to asparagine 159. The chain crosses the membrane as a helical span at residues 191–211 (IREAFLVSLMALSSGYMVALL). Residues 212–238 (WRHKKQAQHLHSTSLSSKASPEQRATR) lie on the Cytoplasmic side of the membrane. Residues 239 to 259 (TILLLMSFFVVLYILENAVFY) form a helical membrane-spanning segment. At 260 to 268 (SRIKFKDGS) the chain is on the extracellular side. Residues 269-289 (ILYCVQIILCHSYATVNPFVF) form a helical membrane-spanning segment. At 290 to 310 (ICTEKHIIKFWESKCGRIVNI) the chain is on the cytoplasmic side.

Belongs to the G-protein coupled receptor 1 family.

The protein resides in the cell membrane. Putative pheromone receptor implicated in the regulation of social and reproductive behavior. In Mus musculus (Mouse), this protein is Vomeronasal type-1 receptor 40 (Vmn1r40).